The chain runs to 160 residues: uncharacterized protein (160 aa).

One can recognise an N-acetyltransferase domain in the interval 9 to 151 (LLINYKTLEK…GENPLIWLPE (143 aa)).

This is an uncharacterized protein from Oceanobacillus iheyensis (strain DSM 14371 / CIP 107618 / JCM 11309 / KCTC 3954 / HTE831).